The sequence spans 300 residues: Ribosomal protein L11 methyltransferase (300 aa).

T152, G173, D195, and N234 together coordinate S-adenosyl-L-methionine.

The protein belongs to the methyltransferase superfamily. PrmA family.

It is found in the cytoplasm. The catalysed reaction is L-lysyl-[protein] + 3 S-adenosyl-L-methionine = N(6),N(6),N(6)-trimethyl-L-lysyl-[protein] + 3 S-adenosyl-L-homocysteine + 3 H(+). In terms of biological role, methylates ribosomal protein L11. The polypeptide is Ribosomal protein L11 methyltransferase (Paraburkholderia phymatum (strain DSM 17167 / CIP 108236 / LMG 21445 / STM815) (Burkholderia phymatum)).